Reading from the N-terminus, the 334-residue chain is CRISPR-associated endonuclease Cas1 (334 aa).

Residues glutamate 161, histidine 226, and glutamate 241 each coordinate Mn(2+).

Belongs to the CRISPR-associated endonuclease Cas1 family. Homodimer, forms a heterotetramer with a Cas2 homodimer. Mg(2+) serves as cofactor. Mn(2+) is required as a cofactor.

Functionally, CRISPR (clustered regularly interspaced short palindromic repeat), is an adaptive immune system that provides protection against mobile genetic elements (viruses, transposable elements and conjugative plasmids). CRISPR clusters contain spacers, sequences complementary to antecedent mobile elements, and target invading nucleic acids. CRISPR clusters are transcribed and processed into CRISPR RNA (crRNA). Acts as a dsDNA endonuclease. Involved in the integration of spacer DNA into the CRISPR cassette. The sequence is that of CRISPR-associated endonuclease Cas1 from Methanothermobacter thermautotrophicus (strain ATCC 29096 / DSM 1053 / JCM 10044 / NBRC 100330 / Delta H) (Methanobacterium thermoautotrophicum).